The primary structure comprises 343 residues: Selenide, water dikinase (343 aa).

Residue Cys-15 is part of the active site. ATP-binding positions include Lys-18 and 46–48 (NKD). Residue Asp-49 participates in Mg(2+) binding. Residues Asp-66, Asp-89, and 137 to 139 (GHS) contribute to the ATP site. Asp-89 lines the Mg(2+) pocket. Asp-225 contributes to the Mg(2+) binding site.

It belongs to the selenophosphate synthase 1 family. Class I subfamily. Homodimer. Mg(2+) is required as a cofactor.

It catalyses the reaction hydrogenselenide + ATP + H2O = selenophosphate + AMP + phosphate + 2 H(+). Its function is as follows. Synthesizes selenophosphate from selenide and ATP. This is Selenide, water dikinase from Sulfurovum sp. (strain NBC37-1).